A 480-amino-acid polypeptide reads, in one-letter code: tRNA-2-methylthio-N(6)-dimethylallyladenosine synthase (480 aa).

In terms of domain architecture, MTTase N-terminal spans 32 to 149 (RKLYIRTFGC…LPELIRRRRA (118 aa)). [4Fe-4S] cluster contacts are provided by Cys-41, Cys-78, Cys-112, Cys-186, Cys-190, and Cys-193. A Radical SAM core domain is found at 172-405 (RIEGATAFVS…QALINAQAAA (234 aa)). Residues 408 to 471 (QAMVGTRQRL…PNSLRARVAD (64 aa)) form the TRAM domain.

The protein belongs to the methylthiotransferase family. MiaB subfamily. Monomer. It depends on [4Fe-4S] cluster as a cofactor.

It localises to the cytoplasm. The enzyme catalyses N(6)-dimethylallyladenosine(37) in tRNA + (sulfur carrier)-SH + AH2 + 2 S-adenosyl-L-methionine = 2-methylsulfanyl-N(6)-dimethylallyladenosine(37) in tRNA + (sulfur carrier)-H + 5'-deoxyadenosine + L-methionine + A + S-adenosyl-L-homocysteine + 2 H(+). Functionally, catalyzes the methylthiolation of N6-(dimethylallyl)adenosine (i(6)A), leading to the formation of 2-methylthio-N6-(dimethylallyl)adenosine (ms(2)i(6)A) at position 37 in tRNAs that read codons beginning with uridine. This chain is tRNA-2-methylthio-N(6)-dimethylallyladenosine synthase, found in Bordetella petrii (strain ATCC BAA-461 / DSM 12804 / CCUG 43448).